The sequence spans 235 residues: Cytochrome c-554 (235 aa).

The signal sequence occupies residues 1-24 (MKIMIACGLVAAALFTLTSGQSLA). 15 residues coordinate heme: Cys-35, Cys-38, His-39, His-51, Cys-84, Cys-87, His-88, Cys-112, Cys-115, His-116, His-126, Cys-158, Cys-161, His-162, and His-203. The tract at residues 121-144 (NFRGDHRKSGQAFEKSGKKTPRKD) is disordered.

Binds 4 heme groups per subunit.

The protein resides in the periplasm. Functionally, involved in ammonia oxidation; accepts electrons directly from hydroxylamine oxidoreductase (HAO). The protein is Cytochrome c-554 (cycA1) of Nitrosomonas europaea (strain ATCC 19718 / CIP 103999 / KCTC 2705 / NBRC 14298).